We begin with the raw amino-acid sequence, 633 residues long: DNA mismatch repair protein MutL (633 aa).

Disordered stretches follow at residues 336–364 (VRPDDQLAPPGATSLTEPRPTGAAAGEFG) and 384–405 (GWSGGASSSGASSGYSAYTRPE). The segment covering 388–401 (GASSSGASSGYSAY) has biased composition (low complexity).

Belongs to the DNA mismatch repair MutL/HexB family.

This protein is involved in the repair of mismatches in DNA. It is required for dam-dependent methyl-directed DNA mismatch repair. May act as a 'molecular matchmaker', a protein that promotes the formation of a stable complex between two or more DNA-binding proteins in an ATP-dependent manner without itself being part of a final effector complex. The sequence is that of DNA mismatch repair protein MutL from Pseudomonas paraeruginosa (strain DSM 24068 / PA7) (Pseudomonas aeruginosa (strain PA7)).